Consider the following 185-residue polypeptide: Sarcoplasmic calcium-binding proteins I, III, and IV (185 aa).

4 consecutive EF-hand domains span residues 5 to 41 (FQKQ…YKEV), 57 to 92 (SLED…TIAT), 102 to 137 (WCQN…FQLQ), and 138 to 173 (CADV…TSPA). Residues aspartate 19, asparagine 21, aspartate 23, serine 25, aspartate 30, aspartate 70, asparagine 72, aspartate 74, glutamate 81, aspartate 115, serine 117, aspartate 119, and glutamate 126 each contribute to the Ca(2+) site.

Functionally, like parvalbumins, SCPs seem to be more abundant in fast contracting muscles, but no functional relationship can be established from this distribution. This Branchiostoma lanceolatum (Common lancelet) protein is Sarcoplasmic calcium-binding proteins I, III, and IV.